The following is a 569-amino-acid chain: Probable protein phosphatase 2C BIPP2C1 (569 aa).

Disordered regions lie at residues 166–212 (GSSN…SSKV) and 251–279 (SLDD…GSSI). Low complexity predominate over residues 174 to 183 (SEVGVESECG). A PPM-type phosphatase domain is found at 329-564 (AAMLPHPSKV…DDVTVVVSVV (236 aa)). Asp358, Gly359, Asp488, and Asp555 together coordinate Mn(2+).

This sequence belongs to the PP2C family. Requires Mg(2+) as cofactor. Mn(2+) serves as cofactor.

It carries out the reaction O-phospho-L-seryl-[protein] + H2O = L-seryl-[protein] + phosphate. The catalysed reaction is O-phospho-L-threonyl-[protein] + H2O = L-threonyl-[protein] + phosphate. Functionally, may play a role in responses to biotic and abiotic stresses. This chain is Probable protein phosphatase 2C BIPP2C1 (BIPP2C1), found in Oryza sativa subsp. indica (Rice).